Consider the following 1037-residue polypeptide: Probable inorganic carbon transporter subunit DabA 2 (1037 aa).

Residues Cys-460, Asp-462, His-719, and Cys-734 each coordinate Zn(2+).

This sequence belongs to the inorganic carbon transporter (TC 9.A.2) DabA family. As to quaternary structure, forms a complex with DabB. The cofactor is Zn(2+).

It is found in the cell inner membrane. Its function is as follows. Part of an energy-coupled inorganic carbon pump. The polypeptide is Probable inorganic carbon transporter subunit DabA 2 (Nitrobacter winogradskyi (strain ATCC 25391 / DSM 10237 / CIP 104748 / NCIMB 11846 / Nb-255)).